Consider the following 482-residue polypeptide: PHD finger protein At3g20280 (482 aa).

Residues 45–97 form a PHD-type zinc finger; the sequence is AMACQICEVTINEMDTLLICDACEKAYHLKCLQGNNMKGVPKSEWHCSRCVQA. Disordered regions lie at residues 188–210 and 314–482; these read TNIGSQGSKENVACGANSPAPVS and SSNS…ENAA. Residues 314 to 324 are compositionally biased toward low complexity; the sequence is SSNSQQAVSHS. Composition is skewed to polar residues over residues 377–386 and 393–428; these read ACQNHPTASP and QDSTITAAPSVTQEDSAFNTEKTPPQPLSVSSNYDS. Over residues 447 to 482 the composition is skewed to basic and acidic residues; that stretch reads DSEKGKGLNGLDDRHQEQPSEPEFYKSDSVKEENAA.

This Arabidopsis thaliana (Mouse-ear cress) protein is PHD finger protein At3g20280.